A 701-amino-acid polypeptide reads, in one-letter code: Elongation factor G (701 aa).

In terms of domain architecture, tr-type G spans 10-290; that stretch reads AKVRNIGIMA…AVVDYLPSPL (281 aa). GTP contacts are provided by residues 19–26, 83–87, and 137–140; these read AHIDAGKT, DTPGH, and NKMD.

Belongs to the TRAFAC class translation factor GTPase superfamily. Classic translation factor GTPase family. EF-G/EF-2 subfamily.

It localises to the cytoplasm. Catalyzes the GTP-dependent ribosomal translocation step during translation elongation. During this step, the ribosome changes from the pre-translocational (PRE) to the post-translocational (POST) state as the newly formed A-site-bound peptidyl-tRNA and P-site-bound deacylated tRNA move to the P and E sites, respectively. Catalyzes the coordinated movement of the two tRNA molecules, the mRNA and conformational changes in the ribosome. The polypeptide is Elongation factor G (Tropheryma whipplei (strain Twist) (Whipple's bacillus)).